The sequence spans 179 residues: Replication restart protein DnaT (179 aa).

A disordered region spans residues 156–179; that stretch reads GGLPKRDVNTVSEPDSQIPPGFRG.

The protein belongs to the DnaT family. As to quaternary structure, homooligomerizes. Interacts with PriB. Component of the replication restart primosome. Primosome assembly occurs via a 'hand-off' mechanism. PriA binds to replication forks, subsequently PriB then DnaT bind; DnaT then displaces ssDNA to generate the helicase loading substrate.

Functionally, involved in the restart of stalled replication forks, which reloads the replicative helicase on sites other than the origin of replication. Can function in multiple replication restart pathways. Displaces ssDNA from a PriB-ssDNA complex. Probably forms a spiral filament on ssDNA. The polypeptide is Replication restart protein DnaT (Shigella boydii serotype 18 (strain CDC 3083-94 / BS512)).